The following is a 230-amino-acid chain: NAD-dependent protein deacylase 1 (230 aa).

The Deacetylase sirtuin-type domain occupies 1 to 226 (MESGIPTYRE…SHLSAFLSRE (226 aa)). Substrate is bound by residues Y41 and R44. Residue 75 to 78 (QNID) participates in NAD(+) binding. H93 serves as the catalytic Proton acceptor. C101, C104, C128, and C131 together coordinate Zn(2+). NAD(+) is bound by residues 168-170 (GTS), 194-196 (NTV), and A212.

The protein belongs to the sirtuin family. Class III subfamily. Zn(2+) serves as cofactor.

The protein localises to the cytoplasm. The enzyme catalyses N(6)-acetyl-L-lysyl-[protein] + NAD(+) + H2O = 2''-O-acetyl-ADP-D-ribose + nicotinamide + L-lysyl-[protein]. The catalysed reaction is N(6)-succinyl-L-lysyl-[protein] + NAD(+) + H2O = 2''-O-succinyl-ADP-D-ribose + nicotinamide + L-lysyl-[protein]. NAD-dependent lysine deacetylase and desuccinylase that specifically removes acetyl and succinyl groups on target proteins. Modulates the activities of several proteins which are inactive in their acylated form. This chain is NAD-dependent protein deacylase 1, found in Pseudomonas syringae pv. tomato (strain ATCC BAA-871 / DC3000).